The following is a 450-amino-acid chain: Glucose-6-phosphate isomerase (450 aa).

The active-site Proton donor is E290. Active-site residues include H311 and K425.

The protein belongs to the GPI family.

The protein resides in the cytoplasm. The catalysed reaction is alpha-D-glucose 6-phosphate = beta-D-fructose 6-phosphate. It functions in the pathway carbohydrate biosynthesis; gluconeogenesis. It participates in carbohydrate degradation; glycolysis; D-glyceraldehyde 3-phosphate and glycerone phosphate from D-glucose: step 2/4. In terms of biological role, catalyzes the reversible isomerization of glucose-6-phosphate to fructose-6-phosphate. The protein is Glucose-6-phosphate isomerase of Limosilactobacillus fermentum (Lactobacillus fermentum).